Consider the following 429-residue polypeptide: Palmitoyltransferase ZDHHC23 (429 aa).

The Cytoplasmic portion of the chain corresponds to 1–81 (MKPVKKKKTE…RIPWLRGAKK (81 aa)). Residues 82 to 102 (VNISILPPLVLLPVLLRVASW) traverse the membrane as a helical segment. Residue His-103 is a topological domain, lumenal. The helical transmembrane segment at 104–124 (FLLGVVVLTSLPMLALWYYYL) threads the bilayer. Residues 125-130 (THRRKE) lie on the Cytoplasmic side of the membrane. The chain crosses the membrane as a helical span at residues 131–151 (QTLFFLSLGLFSLGYMYYVFL). Residues 152–159 (QEVVPQGH) are Lumenal-facing. Residues 160-180 (VGPAQLALLTCGLFLILVALY) form a helical membrane-spanning segment. Residues 181–296 (RAKKNPGYLS…NSCVGESNHQ (116 aa)) lie on the Cytoplasmic side of the membrane. The interval 212–247 (QEKTKGFPGTDTSGSLNNRTLKDDAKGSSRVGLDSP) is disordered. Over residues 221–230 (TDTSGSLNNR) the composition is skewed to polar residues. The region spanning 253 to 303 (DWCAKCQLVRPARAWHCRICGICVRRMDHHCVWINSCVGESNHQAFILALS) is the DHHC domain. Cys-283 (S-palmitoyl cysteine intermediate) is an active-site residue. Residues 297–317 (AFILALSIFLLTSVYGISLTL) form a helical membrane-spanning segment. The Lumenal portion of the chain corresponds to 318–347 (NTICRDRSLFTALFYCPGVYANYSSALSFT). A helical transmembrane segment spans residues 348-368 (CVWYSVIITAGMAYIFLIQLI). Residues 369–429 (NISYNVTERE…TVHTPAEDIV (61 aa)) lie on the Cytoplasmic side of the membrane. Residues 426 to 429 (EDIV) form an interaction with NOS1 region.

Belongs to the DHHC palmitoyltransferase family. Interacts with NOS1. As to expression, expressed in the brain (at protein level), with highest levels in olfactory bulb, piriform cortex and hippocampus.

It is found in the golgi apparatus membrane. Its subcellular location is the golgi apparatus. It localises to the trans-Golgi network membrane. The catalysed reaction is L-cysteinyl-[protein] + hexadecanoyl-CoA = S-hexadecanoyl-L-cysteinyl-[protein] + CoA. Its function is as follows. Palmitoyltransferase that could catalyze the addition of palmitate onto various protein substrates and be involved in a variety of cellular processes. Palmitoyltransferase that mediates palmitoylation of KCNMA1, regulating localization of KCNMA1 to the plasma membrane. May be involved in NOS1 regulation and targeting to the synaptic membrane. In Rattus norvegicus (Rat), this protein is Palmitoyltransferase ZDHHC23.